A 298-amino-acid polypeptide reads, in one-letter code: Epimerase family protein SSP1921 (298 aa).

The protein belongs to the NAD(P)-dependent epimerase/dehydratase family. SDR39U1 subfamily.

This is Epimerase family protein SSP1921 from Staphylococcus saprophyticus subsp. saprophyticus (strain ATCC 15305 / DSM 20229 / NCIMB 8711 / NCTC 7292 / S-41).